We begin with the raw amino-acid sequence, 133 residues long: Ycf54-like protein (133 aa).

Belongs to the ycf54 family.

The polypeptide is Ycf54-like protein (Synechocystis sp. (strain ATCC 27184 / PCC 6803 / Kazusa)).